The primary structure comprises 451 residues: Tubulin gamma-1 chain (451 aa).

Residue S131 is modified to Phosphoserine; by BRSK1. A GTP-binding site is contributed by 142–148 (AGGTGSG).

Belongs to the tubulin family. In terms of assembly, component of the gamma-tubulin ring complex (gTuRC) consisting of TUBGCP2, TUBGCP3, TUBGCP4, TUBGCP5 and TUBGCP6 and gamma-tubulin TUBG1 or TUBG2. TUBGCP2, TUBGCP3, TUBGCP4, TUBGCP5 and TUBGCP6 assemble in a 5:5:2:1:1 stoichiometry; each is associated with a gamma-tubulin, thereby arranging 14 gamma-tubulins in a helical manner. Gamma-tubulin at the first position is blocked by TUBGCP3 at the last position, allowing 13 protafilaments to grow into a microtubule. The gTuRC (via TUBGCP3 and TUBGCP6) interacts with ACTB and MZT1; the interactions form a luminal bridge that stabilizes the initial structure during complex assembly. The gTuRC (via TUBGCP2) interacts with MZT2A/MZT2B and CDK5RAP2 (via CM1 motif); the interactions play a role in gTuRC activation. Interacts with alpha-beta tubulin heterodimers; the interaction allows microtubules to nucleate from the gTuRC. Interacts with B9D2. Interacts with CDK5RAP2; the interaction is leading to centrosomal localization of TUBG1 and CDK5RAP2. Interacts with CIMAP3. Interacts with SAS6 and NUP62 at the centrosome. Interacts with EML3 (phosphorylated at 'Thr-881') and HAUS8. Interacts with DNM2; this interaction may participate in centrosome cohesion. Interacts with CCDC66. Phosphorylation at Ser-131 by BRSK1 regulates centrosome duplication, possibly by mediating relocation of gamma-tubulin and its associated proteins from the cytoplasm to the centrosome.

The protein localises to the cytoplasm. The protein resides in the cytoskeleton. It is found in the microtubule organizing center. It localises to the centrosome. Its subcellular location is the spindle. Tubulin is the major constituent of microtubules, protein filaments consisting of alpha- and beta-tubulin heterodimers. Gamma-tubulin is a key component of the gamma-tubulin ring complex (gTuRC) which mediates microtubule nucleation. The gTuRC regulates the minus-end nucleation of alpha-beta tubulin heterodimers that grow into microtubule protafilaments, a critical step in centrosome duplication and spindle formation. In Homo sapiens (Human), this protein is Tubulin gamma-1 chain.